Consider the following 334-residue polypeptide: Heat-inducible transcription repressor HrcA (334 aa).

The protein belongs to the HrcA family.

Negative regulator of class I heat shock genes (grpE-dnaK-dnaJ and groELS operons). Prevents heat-shock induction of these operons. This chain is Heat-inducible transcription repressor HrcA, found in Acidovorax sp. (strain JS42).